A 226-amino-acid polypeptide reads, in one-letter code: Protein FATTY ACID EXPORT 1, chloroplastic (226 aa).

A chloroplast-targeting transit peptide spans methionine 1 to serine 39. Residues serine 66–glutamate 87 form a disordered region. Residues lysine 67–glutamate 80 are compositionally biased toward polar residues. A run of 3 helical transmembrane segments spans residues leucine 130–isoleucine 150, phenylalanine 158–alanine 178, and phenylalanine 186–valine 206.

The protein belongs to the TMEM14 family. As to expression, expressed in cotyledons, leaves, sepals and pollen.

The protein localises to the plastid. It is found in the chloroplast inner membrane. Its function is as follows. Mediates the export of free fatty acid from the plastids. Potentially prefers palmitic acid (C16:0) over oleic acid (C18:1) and stearic acid (C18:0). Not involved in fatty acid activation. Required for biogenesis of the outer pollen cell wall, in particular for the assembly of exine and pollen coat and for the release of ketone wax components. The protein is Protein FATTY ACID EXPORT 1, chloroplastic of Arabidopsis thaliana (Mouse-ear cress).